The sequence spans 462 residues: L-seryl-tRNA(Sec) selenium transferase (462 aa).

Position 295 is an N6-(pyridoxal phosphate)lysine (K295).

It belongs to the SelA family. In terms of assembly, homodecamer; pentamer of dimers. Binds only one seryl-tRNA(Sec) per dimer. The cofactor is pyridoxal 5'-phosphate.

It is found in the cytoplasm. The enzyme catalyses L-seryl-tRNA(Sec) + selenophosphate + H(+) = L-selenocysteinyl-tRNA(Sec) + phosphate. It participates in aminoacyl-tRNA biosynthesis; selenocysteinyl-tRNA(Sec) biosynthesis; selenocysteinyl-tRNA(Sec) from L-seryl-tRNA(Sec) (bacterial route): step 1/1. Functionally, converts seryl-tRNA(Sec) to selenocysteinyl-tRNA(Sec) required for selenoprotein biosynthesis. In Klebsiella pneumoniae (strain 342), this protein is L-seryl-tRNA(Sec) selenium transferase.